The chain runs to 528 residues: Peptide chain release factor 3 (528 aa).

One can recognise a tr-type G domain in the interval 10–279 (AKRRTFAIIS…GLVEWAPAPM (270 aa)). Residues 19–26 (SHPDAGKT), 87–91 (DTPGH), and 141–144 (NKLD) contribute to the GTP site.

It belongs to the TRAFAC class translation factor GTPase superfamily. Classic translation factor GTPase family. PrfC subfamily.

It localises to the cytoplasm. Functionally, increases the formation of ribosomal termination complexes and stimulates activities of RF-1 and RF-2. It binds guanine nucleotides and has strong preference for UGA stop codons. It may interact directly with the ribosome. The stimulation of RF-1 and RF-2 is significantly reduced by GTP and GDP, but not by GMP. This chain is Peptide chain release factor 3, found in Escherichia coli O1:K1 / APEC.